A 218-amino-acid polypeptide reads, in one-letter code: ATP phosphoribosyltransferase (218 aa).

The protein belongs to the ATP phosphoribosyltransferase family. Short subfamily. Heteromultimer composed of HisG and HisZ subunits.

It localises to the cytoplasm. The enzyme catalyses 1-(5-phospho-beta-D-ribosyl)-ATP + diphosphate = 5-phospho-alpha-D-ribose 1-diphosphate + ATP. Its pathway is amino-acid biosynthesis; L-histidine biosynthesis; L-histidine from 5-phospho-alpha-D-ribose 1-diphosphate: step 1/9. Functionally, catalyzes the condensation of ATP and 5-phosphoribose 1-diphosphate to form N'-(5'-phosphoribosyl)-ATP (PR-ATP). Has a crucial role in the pathway because the rate of histidine biosynthesis seems to be controlled primarily by regulation of HisG enzymatic activity. This chain is ATP phosphoribosyltransferase, found in Burkholderia thailandensis (strain ATCC 700388 / DSM 13276 / CCUG 48851 / CIP 106301 / E264).